The sequence spans 135 residues: Glutaredoxin-C4 (135 aa).

In terms of domain architecture, Glutaredoxin spans 32-132; it reads ADFVKKTISS…KLLGVSGNKE (101 aa). C52 and C55 are oxidised to a cystine.

It belongs to the glutaredoxin family. CPYC subfamily.

It is found in the cytoplasm. In terms of biological role, has a glutathione-disulfide oxidoreductase activity in the presence of NADPH and glutathione reductase. Reduces low molecular weight disulfides and proteins. The polypeptide is Glutaredoxin-C4 (GRXC4) (Arabidopsis thaliana (Mouse-ear cress)).